The sequence spans 198 residues: ATP-dependent Clp protease proteolytic subunit (198 aa).

Ser98 acts as the Nucleophile in catalysis. The active site involves His123.

It belongs to the peptidase S14 family. Fourteen ClpP subunits assemble into 2 heptameric rings which stack back to back to give a disk-like structure with a central cavity, resembling the structure of eukaryotic proteasomes.

It is found in the cytoplasm. It carries out the reaction Hydrolysis of proteins to small peptides in the presence of ATP and magnesium. alpha-casein is the usual test substrate. In the absence of ATP, only oligopeptides shorter than five residues are hydrolyzed (such as succinyl-Leu-Tyr-|-NHMec, and Leu-Tyr-Leu-|-Tyr-Trp, in which cleavage of the -Tyr-|-Leu- and -Tyr-|-Trp bonds also occurs).. Functionally, cleaves peptides in various proteins in a process that requires ATP hydrolysis. Has a chymotrypsin-like activity. Plays a major role in the degradation of misfolded proteins. This is ATP-dependent Clp protease proteolytic subunit from Ehrlichia ruminantium (strain Gardel).